Consider the following 133-residue polypeptide: Small ribosomal subunit protein uS8 (133 aa).

Belongs to the universal ribosomal protein uS8 family. In terms of assembly, part of the 30S ribosomal subunit. Contacts proteins S5 and S12.

Its function is as follows. One of the primary rRNA binding proteins, it binds directly to 16S rRNA central domain where it helps coordinate assembly of the platform of the 30S subunit. This is Small ribosomal subunit protein uS8 from Prochlorococcus marinus (strain MIT 9303).